Reading from the N-terminus, the 375-residue chain is 23S rRNA (uracil(747)-C(5))-methyltransferase RlmC (375 aa).

[4Fe-4S] cluster-binding residues include Cys3, Cys11, Cys14, and Cys87. Residues Gln212, Phe241, Glu262, and Asn307 each contribute to the S-adenosyl-L-methionine site. Catalysis depends on Cys334, which acts as the Nucleophile.

This sequence belongs to the class I-like SAM-binding methyltransferase superfamily. RNA M5U methyltransferase family. RlmC subfamily.

It carries out the reaction uridine(747) in 23S rRNA + S-adenosyl-L-methionine = 5-methyluridine(747) in 23S rRNA + S-adenosyl-L-homocysteine + H(+). Functionally, catalyzes the formation of 5-methyl-uridine at position 747 (m5U747) in 23S rRNA. The sequence is that of 23S rRNA (uracil(747)-C(5))-methyltransferase RlmC from Shigella sonnei (strain Ss046).